The primary structure comprises 390 residues: S-adenosylmethionine synthase (390 aa).

Residue His17 coordinates ATP. Asp19 is a binding site for Mg(2+). K(+) is bound at residue Glu45. The L-methionine site is built by Glu58 and Gln101. The flexible loop stretch occupies residues 101–111; the sequence is QSPDIGQGVDT. Residues 160–162, 226–227, Asp235, 241–242, Ala258, and Lys262 each bind ATP; these read DGK, RF, and RK. Asp235 provides a ligand contact to L-methionine. Lys266 contacts L-methionine.

This sequence belongs to the AdoMet synthase family. As to quaternary structure, homotetramer; dimer of dimers. Mg(2+) serves as cofactor. K(+) is required as a cofactor.

It is found in the cytoplasm. It catalyses the reaction L-methionine + ATP + H2O = S-adenosyl-L-methionine + phosphate + diphosphate. It participates in amino-acid biosynthesis; S-adenosyl-L-methionine biosynthesis; S-adenosyl-L-methionine from L-methionine: step 1/1. Its function is as follows. Catalyzes the formation of S-adenosylmethionine (AdoMet) from methionine and ATP. The overall synthetic reaction is composed of two sequential steps, AdoMet formation and the subsequent tripolyphosphate hydrolysis which occurs prior to release of AdoMet from the enzyme. The sequence is that of S-adenosylmethionine synthase from Anaeromyxobacter dehalogenans (strain 2CP-1 / ATCC BAA-258).